The primary structure comprises 681 residues: DNA ligase (681 aa).

NAD(+)-binding positions include 45 to 49, 94 to 95, and glutamate 120; these read DFDFD and SL. Catalysis depends on lysine 122, which acts as the N6-AMP-lysine intermediate. Residues arginine 143, glutamate 177, lysine 289, and lysine 313 each coordinate NAD(+). Residues cysteine 403, cysteine 406, cysteine 421, and cysteine 426 each contribute to the Zn(2+) site. Positions 593–681 constitute a BRCT domain; the sequence is SDQQPFAGQS…SLKINFKNTI (89 aa).

The protein belongs to the NAD-dependent DNA ligase family. LigA subfamily. The cofactor is Mg(2+). Mn(2+) serves as cofactor.

It catalyses the reaction NAD(+) + (deoxyribonucleotide)n-3'-hydroxyl + 5'-phospho-(deoxyribonucleotide)m = (deoxyribonucleotide)n+m + AMP + beta-nicotinamide D-nucleotide.. Its function is as follows. DNA ligase that catalyzes the formation of phosphodiester linkages between 5'-phosphoryl and 3'-hydroxyl groups in double-stranded DNA using NAD as a coenzyme and as the energy source for the reaction. It is essential for DNA replication and repair of damaged DNA. This Leptospira borgpetersenii serovar Hardjo-bovis (strain L550) protein is DNA ligase.